Reading from the N-terminus, the 285-residue chain is Bifunctional protein FolD (285 aa).

NADP(+)-binding positions include 166 to 168 (GAS) and I232.

This sequence belongs to the tetrahydrofolate dehydrogenase/cyclohydrolase family. As to quaternary structure, homodimer.

The enzyme catalyses (6R)-5,10-methylene-5,6,7,8-tetrahydrofolate + NADP(+) = (6R)-5,10-methenyltetrahydrofolate + NADPH. The catalysed reaction is (6R)-5,10-methenyltetrahydrofolate + H2O = (6R)-10-formyltetrahydrofolate + H(+). Its pathway is one-carbon metabolism; tetrahydrofolate interconversion. Its function is as follows. Catalyzes the oxidation of 5,10-methylenetetrahydrofolate to 5,10-methenyltetrahydrofolate and then the hydrolysis of 5,10-methenyltetrahydrofolate to 10-formyltetrahydrofolate. In Baumannia cicadellinicola subsp. Homalodisca coagulata, this protein is Bifunctional protein FolD.